Reading from the N-terminus, the 133-residue chain is Fatty acid-binding protein homolog 2 (133 aa).

Residues Arg-107 and Arg-127 to Tyr-129 each bind a fatty acid.

This sequence belongs to the calycin superfamily. Fatty-acid binding protein (FABP) family.

Its function is as follows. May play a role in the acquisition, storage, and transport of lipids, and may be important to the organism since it is incapable of synthesizing most of its lipids de novo. The chain is Fatty acid-binding protein homolog 2 (FABP2) from Echinococcus granulosus (Hydatid tapeworm).